Consider the following 452-residue polypeptide: Solute carrier family 52, riboflavin transporter, member 3-B (452 aa).

5 helical membrane-spanning segments follow: residues 11–31, 38–58, 73–93, 111–131, and 138–158; these read LFGI…PLIV, WLLP…PLFI, PVIY…AFLW, LSFL…PFMM, and LTTY…VALV. N-linked (GlcNAc...) asparagine glycosylation is found at Asn-168, Asn-174, Asn-179, and Asn-193. The next 6 membrane-spanning stretches (helical) occupy residues 199–219, 285–305, 321–341, 344–364, 381–401, and 412–432; these read FFLF…LLNL, VFIF…LPSV, AATL…FVPI, LVLM…IMAM, ALIV…KVII, and ALVW…LSMF.

This sequence belongs to the riboflavin transporter family.

The protein resides in the cell membrane. It carries out the reaction riboflavin(in) = riboflavin(out). Plasma membrane transporter mediating the uptake by cells of the water soluble vitamin B2/riboflavin that plays a key role in biochemical oxidation-reduction reactions of the carbohydrate, lipid, and amino acid metabolism. In Danio rerio (Zebrafish), this protein is Solute carrier family 52, riboflavin transporter, member 3-B (slc52a3b).